Reading from the N-terminus, the 550-residue chain is CCR4-NOT transcription complex subunit 6-like-B (550 aa).

The tract at residues 1-148 is required for interaction with cnot1, cnot3 and cnot7; sequence MPKEKYDPPD…LYQEPDGMRK (148 aa). LRR repeat units follow at residues 52-73, 75-96, 98-120, and 121-143; these read HLTV…IAKL, NLVY…LGNV, SLRE…GRLF, and RLQT…YQEP. The segment at 153–550 is nuclease domain; it reads MLDNLSVHPE…INGVHLPSRR (398 aa). Glu235 provides a ligand contact to Mg(2+). Substrate is bound by residues Glu235, Glu271, His355, and Pro360. Residue Asp405 coordinates Mg(2+). Asp405 serves as the catalytic Proton donor/acceptor. Substrate-binding residues include Asn407, Asn474, and Phe479.

This sequence belongs to the CCR4/nocturin family. As to quaternary structure, component of the CCR4-NOT complex. Mg(2+) serves as cofactor.

It is found in the cytoplasm. The protein localises to the nucleus. The enzyme catalyses Exonucleolytic cleavage of poly(A) to 5'-AMP.. Its function is as follows. Poly(A) nuclease with 3'-5' RNase activity. Catalytic component of the CCR4-NOT complex which is one of the major cellular mRNA deadenylases and is linked to various cellular processes including bulk mRNA degradation, miRNA-mediated repression, translational repression during translational initiation and general transcription regulation. Additional complex functions may be a consequence of its influence on mRNA expression. The chain is CCR4-NOT transcription complex subunit 6-like-B (cnot6l-b) from Xenopus laevis (African clawed frog).